Consider the following 243-residue polypeptide: 23S rRNA (guanosine-2'-O-)-methyltransferase RlmB (243 aa).

Residues G196, I216, and L225 each contribute to the S-adenosyl-L-methionine site.

It belongs to the class IV-like SAM-binding methyltransferase superfamily. RNA methyltransferase TrmH family. RlmB subfamily. In terms of assembly, homodimer.

It localises to the cytoplasm. It catalyses the reaction guanosine(2251) in 23S rRNA + S-adenosyl-L-methionine = 2'-O-methylguanosine(2251) in 23S rRNA + S-adenosyl-L-homocysteine + H(+). Its function is as follows. Specifically methylates the ribose of guanosine 2251 in 23S rRNA. In Salmonella typhi, this protein is 23S rRNA (guanosine-2'-O-)-methyltransferase RlmB.